Here is a 272-residue protein sequence, read N- to C-terminus: Phosphoglycolate phosphatase 1 (272 aa).

The active-site Nucleophile is Asp-19. Positions 19, 21, and 182 each coordinate Mg(2+).

Belongs to the HAD-like hydrolase superfamily. CbbY/CbbZ/Gph/YieH family. Requires Mg(2+) as cofactor.

It catalyses the reaction 2-phosphoglycolate + H2O = glycolate + phosphate. It participates in organic acid metabolism; glycolate biosynthesis; glycolate from 2-phosphoglycolate: step 1/1. Specifically catalyzes the dephosphorylation of 2-phosphoglycolate. Is involved in the dissimilation of the intracellular 2-phosphoglycolate formed during the DNA repair of 3'-phosphoglycolate ends, a major class of DNA lesions induced by oxidative stress. This Pseudomonas aeruginosa (strain ATCC 15692 / DSM 22644 / CIP 104116 / JCM 14847 / LMG 12228 / 1C / PRS 101 / PAO1) protein is Phosphoglycolate phosphatase 1.